A 399-amino-acid chain; its full sequence is Adenylate cyclase (399 aa).

Residues 1 to 10 (MTVGDTTSGS) show a composition bias toward polar residues. Positions 1-35 (MTVGDTTSGSGEEPAADSSVHATPHHEVDHTVEPT) are disordered. Over residues 24–33 (PHHEVDHTVE) the composition is skewed to basic and acidic residues. The Guanylate cyclase domain maps to 198–307 (RVRFADLVGF…TTVNLASRLT (110 aa)). Residues Asp203 and Asp247 each coordinate Mg(2+).

It belongs to the adenylyl cyclase class-3 family. Requires Mg(2+) as cofactor.

It carries out the reaction ATP = 3',5'-cyclic AMP + diphosphate. The sequence is that of Adenylate cyclase (cya) from Streptomyces griseus.